Here is a 1527-residue protein sequence, read N- to C-terminus: DNA (cytosine-5)-methyltransferase 1A (1527 aa).

2 disordered regions span residues methionine 1 to alanine 62 and glycine 661 to lysine 718. Acidic residues-rich tracts occupy residues glutamate 25–phenylalanine 36 and lysine 664–valine 692. The span at serine 709–lysine 718 shows a compositional bias: basic and acidic residues. BAH domains lie at leucine 742–proline 874 and isoleucine 910–proline 1049. An SAM-dependent MTase C5-type domain is found at leucine 1092–lysine 1526. Cysteine 1197 is a catalytic residue.

The protein belongs to the class I-like SAM-binding methyltransferase superfamily. C5-methyltransferase family. In terms of tissue distribution, expressed in roots and inflorescences. Expressed in roots, panicles, anthers, pistils, endosperm and imbibed embryos. Expressed in tissues containing actively replicating and dividing cells, such as shoot and root meristems.

The protein localises to the nucleus. It catalyses the reaction a 2'-deoxycytidine in DNA + S-adenosyl-L-methionine = a 5-methyl-2'-deoxycytidine in DNA + S-adenosyl-L-homocysteine + H(+). Probably methylates CpG residues and maintains DNA methylation. May be involved in methylation-dependent gene silencing. May play a minor role in the maintenance of DNA methylation. This Oryza sativa subsp. japonica (Rice) protein is DNA (cytosine-5)-methyltransferase 1A.